A 72-amino-acid polypeptide reads, in one-letter code: MAKEETIQMQGEILETLPNATFRVKLENGHIVLGHISGKMRMHYIRILPGDKVTVDLTPYDLSRARITFRAK.

In terms of domain architecture, S1-like spans 1 to 72 (MAKEETIQMQ…SRARITFRAK (72 aa)).

It belongs to the IF-1 family. Component of the 30S ribosomal translation pre-initiation complex which assembles on the 30S ribosome in the order IF-2 and IF-3, IF-1 and N-formylmethionyl-tRNA(fMet); mRNA recruitment can occur at any time during PIC assembly.

The protein localises to the cytoplasm. Its function is as follows. One of the essential components for the initiation of protein synthesis. Stabilizes the binding of IF-2 and IF-3 on the 30S subunit to which N-formylmethionyl-tRNA(fMet) subsequently binds. Helps modulate mRNA selection, yielding the 30S pre-initiation complex (PIC). Upon addition of the 50S ribosomal subunit IF-1, IF-2 and IF-3 are released leaving the mature 70S translation initiation complex. In Nitrosospira multiformis (strain ATCC 25196 / NCIMB 11849 / C 71), this protein is Translation initiation factor IF-1.